Reading from the N-terminus, the 366-residue chain is Protein-glutamate methylesterase/protein-glutamine glutaminase of group 2 operon (366 aa).

Residues 19 to 136 form the Response regulatory domain; it reads RVLIVDDSAM…GQGLPAIMRD (118 aa). Asp-70 bears the 4-aspartylphosphate mark. Residues 162–356 enclose the CheB-type methylesterase domain; it reads PGASEDWIHA…ARMMLAAAAD (195 aa). Residues Ser-175, His-201, and Asp-298 contribute to the active site.

It belongs to the CheB family. Phosphorylated by CheA. Phosphorylation of the N-terminal regulatory domain activates the methylesterase activity.

It localises to the cytoplasm. The catalysed reaction is [protein]-L-glutamate 5-O-methyl ester + H2O = L-glutamyl-[protein] + methanol + H(+). The enzyme catalyses L-glutaminyl-[protein] + H2O = L-glutamyl-[protein] + NH4(+). In terms of biological role, involved in chemotaxis. Part of a chemotaxis signal transduction system that modulates chemotaxis in response to various stimuli. Catalyzes the demethylation of specific methylglutamate residues introduced into the chemoreceptors (methyl-accepting chemotaxis proteins or MCP) by CheR. Also mediates the irreversible deamidation of specific glutamine residues to glutamic acid. This Cereibacter sphaeroides (Rhodobacter sphaeroides) protein is Protein-glutamate methylesterase/protein-glutamine glutaminase of group 2 operon.